The sequence spans 525 residues: GMP synthase [glutamine-hydrolyzing] (525 aa).

Residues 16–205 enclose the Glutamine amidotransferase type-1 domain; sequence PVLVVDFGAQ…LHDFAGIGAR (190 aa). Cys93 acts as the Nucleophile in catalysis. Active-site residues include His179 and Glu181. Positions 206–399 constitute a GMPS ATP-PPase domain; it reads WTPANIANAL…LGLPEEIVAR (194 aa). 233–239 is a binding site for ATP; that stretch reads SGGVDSA.

In terms of assembly, homodimer.

It carries out the reaction XMP + L-glutamine + ATP + H2O = GMP + L-glutamate + AMP + diphosphate + 2 H(+). It functions in the pathway purine metabolism; GMP biosynthesis; GMP from XMP (L-Gln route): step 1/1. Catalyzes the synthesis of GMP from XMP. This is GMP synthase [glutamine-hydrolyzing] from Mycobacterium marinum (strain ATCC BAA-535 / M).